The following is a 251-amino-acid chain: Guanine nucleotide-binding protein subunit gamma 3 (251 aa).

Positions 1–10 are enriched in gly residues; that stretch reads MSAPSGGGEG. Positions 1–44 are disordered; sequence MSAPSGGGEGGGKESAAGGVSSSSLAPSSLPPPRPKSPPEYPDL. A compositionally biased stretch (low complexity) spans 14-28; that stretch reads ESAAGGVSSSSLAPS. Pro residues predominate over residues 29 to 41; sequence SLPPPRPKSPPEY. The G protein gamma domain maps to 46–126; that stretch reads GKRREAARVQ…LSLVSFCCCC (81 aa). C248 carries the cysteine methyl ester modification. C248 carries S-farnesyl cysteine lipidation. A propeptide spans 249–251 (removed in mature form); the sequence is LAF.

G proteins are composed of 3 units, alpha, beta and gamma. Expressed in flowers and siliques.

Functionally, guanine nucleotide-binding proteins (G proteins) are involved as a modulator or transducer in various transmembrane signaling systems. The beta and gamma chains are required for the GTPase activity, for replacement of GDP by GTP, and for G protein-effector interaction. In Arabidopsis thaliana (Mouse-ear cress), this protein is Guanine nucleotide-binding protein subunit gamma 3 (GG3).